Here is a 452-residue protein sequence, read N- to C-terminus: Glucose-6-phosphate isomerase (452 aa).

E290 (proton donor) is an active-site residue. Catalysis depends on residues H311 and K425.

Belongs to the GPI family.

Its subcellular location is the cytoplasm. It carries out the reaction alpha-D-glucose 6-phosphate = beta-D-fructose 6-phosphate. It functions in the pathway carbohydrate biosynthesis; gluconeogenesis. Its pathway is carbohydrate degradation; glycolysis; D-glyceraldehyde 3-phosphate and glycerone phosphate from D-glucose: step 2/4. Catalyzes the reversible isomerization of glucose-6-phosphate to fructose-6-phosphate. In Limosilactobacillus reuteri (strain DSM 20016) (Lactobacillus reuteri), this protein is Glucose-6-phosphate isomerase.